A 487-amino-acid chain; its full sequence is GTPase Der (487 aa).

EngA-type G domains follow at residues 3–166 (PVVA…AEAM) and 199–372 (IKLA…DSAT). GTP contacts are provided by residues 9–16 (GRPNVGKS), 56–60 (DTGGI), 118–121 (NKID), 205–212 (GKPNVGKS), 252–256 (DTAGV), and 317–320 (NKWD). Residues 373 to 457 (RRVSTSMLTR…PIQLRFQEGD (85 aa)) form the KH-like domain.

It belongs to the TRAFAC class TrmE-Era-EngA-EngB-Septin-like GTPase superfamily. EngA (Der) GTPase family. Associates with the 50S ribosomal subunit.

Functionally, GTPase that plays an essential role in the late steps of ribosome biogenesis. The protein is GTPase Der of Shewanella oneidensis (strain ATCC 700550 / JCM 31522 / CIP 106686 / LMG 19005 / NCIMB 14063 / MR-1).